Reading from the N-terminus, the 180-residue chain is Nucleoside-triphosphatase THEP1 (180 aa).

Residues 9-16 (GPAGVGKT) and 104-111 (LIVIDEIG) contribute to the ATP site.

This sequence belongs to the THEP1 NTPase family.

The catalysed reaction is a ribonucleoside 5'-triphosphate + H2O = a ribonucleoside 5'-diphosphate + phosphate + H(+). Functionally, has nucleotide phosphatase activity towards ATP, GTP, CTP, TTP and UTP. May hydrolyze nucleoside diphosphates with lower efficiency. This is Nucleoside-triphosphatase THEP1 from Thermococcus kodakarensis (strain ATCC BAA-918 / JCM 12380 / KOD1) (Pyrococcus kodakaraensis (strain KOD1)).